We begin with the raw amino-acid sequence, 1089 residues long: PALM2-AKAP2 fusion protein (1089 aa).

Positions 70-107 form a coiled coil; that stretch reads SEEDEFKVKQLEDNIQRLEQEIQALESEESQISAKEQI. Disordered stretches follow at residues 165–194, 210–231, and 289–362; these read SEDA…SPDH, PGVT…PSHN, and PAHS…SRDG. The segment covering 173–183 has biased composition (basic and acidic residues); sequence SKQDNCGDSRL. R315 and S318 each carry phosphoserine. Positions 317–328 are enriched in basic and acidic residues; the sequence is PSDRMAEGERAN. Positions 329 to 347 are enriched in polar residues; sequence GHSTDQPQDLLGNSLQAPA. Residue S348 is modified to Phosphoserine. The segment covering 348–357 has biased composition (low complexity); it reads SPSSSTSSHC. Residue K370 forms a Glycyl lysine isopeptide (Lys-Gly) (interchain with G-Cter in SUMO1); alternate linkage. Residue K370 forms a Glycyl lysine isopeptide (Lys-Gly) (interchain with G-Cter in SUMO2); alternate linkage. The tract at residues 429–517 is disordered; it reads KNPGIAAKWW…LSTSQPCTAP (89 aa). The segment covering 455–470 has biased composition (basic and acidic residues); sequence LESHRKYKERKEKRAQ. The segment covering 471–508 has biased composition (low complexity); that stretch reads QEQLQLQQQQQQQLQQQQLQQQQLQQQQLQQQLQQQQL. Residue S553 is modified to Phosphoserine. Positions 592–644 are disordered; it reads TVGGTLEDGGTQAAKEQKAPCVSESQSAGAGPANAATQGKEGPYSEPSKRGPL. S678, S682, and S734 each carry phosphoserine. Polar residues predominate over residues 712–749; that stretch reads FSMDNISDSGASNETPSALQENSLADFSLPQTPQTDNP. Disordered regions lie at residues 712-783, 800-899, and 915-934; these read FSMD…DPLE, EQVD…YFSK, and TQES…KQRT. A Phosphothreonine modification is found at T743. A PKA-RII subunit binding domain region spans residues 782-795; that stretch reads LEYQAGLLVQNAIQ. Over residues 801–814 the composition is skewed to basic and acidic residues; the sequence is QVDKAEAHTSKEGS. S847 bears the Phosphoserine mark. Basic and acidic residues predominate over residues 850–871; it reads QEKRDILPKNLPAEDRALREKG. The stretch at 928–958 forms a coiled coil; that stretch reads RSRKQRTLSMIEEEIRAAQEREEELKRQRQV. S936, S964, S995, and S1002 each carry phosphoserine. Residues 946-1021 form a disordered region; that stretch reads QEREEELKRQ…AAGTQRPKNL (76 aa).

As to expression, highly expressed in lung and weakly in thymus and cerebellum. Little or no expression in liver, heart and cerebral cortex. All isoforms are expressed in lung, but KL2A and KL2B isoforms are the principal isoforms in cerebellum.

The protein localises to the apical cell membrane. Its function is as follows. Binds to regulatory subunit (RII) of protein kinase A. May be involved in establishing polarity in signaling systems or in integrating PKA-RII isoforms with downstream effectors to capture, amplify and focus diffuse, trans-cellular signals carried by cAMP. Binds tp and modulates the structure of the actin cytoskeleton. This is PALM2-AKAP2 fusion protein from Mus musculus (Mouse).